Consider the following 242-residue polypeptide: ATP-dependent dethiobiotin synthetase BioD (242 aa).

ATP is bound at residue 12–17; sequence EVGKTV. Thr-16 is a binding site for Mg(2+). The active site involves Lys-37. Ser-41 serves as a coordination point for substrate. Residues Asp-51 and 112–115 each bind ATP; that span reads EGAG. The Mg(2+) site is built by Asp-51 and Glu-112.

Belongs to the dethiobiotin synthetase family. Homodimer. Mg(2+) serves as cofactor.

Its subcellular location is the cytoplasm. It catalyses the reaction (7R,8S)-7,8-diammoniononanoate + CO2 + ATP = (4R,5S)-dethiobiotin + ADP + phosphate + 3 H(+). Its pathway is cofactor biosynthesis; biotin biosynthesis; biotin from 7,8-diaminononanoate: step 1/2. Functionally, catalyzes a mechanistically unusual reaction, the ATP-dependent insertion of CO2 between the N7 and N8 nitrogen atoms of 7,8-diaminopelargonic acid (DAPA, also called 7,8-diammoniononanoate) to form a ureido ring. This Bacillus anthracis (strain A0248) protein is ATP-dependent dethiobiotin synthetase BioD.